A 577-amino-acid polypeptide reads, in one-letter code: Arginine--tRNA ligase (577 aa).

The short motif at 122–132 is the 'HIGH' region element; that stretch reads PNVAKEMHVGH.

This sequence belongs to the class-I aminoacyl-tRNA synthetase family. Monomer.

It localises to the cytoplasm. It carries out the reaction tRNA(Arg) + L-arginine + ATP = L-arginyl-tRNA(Arg) + AMP + diphosphate. This is Arginine--tRNA ligase from Shigella dysenteriae serotype 1 (strain Sd197).